Here is a 329-residue protein sequence, read N- to C-terminus: PTS-dependent dihydroxyacetone kinase 1, dihydroxyacetone-binding subunit DhaK (329 aa).

The DhaK domain maps to 7–329; the sequence is GTDQVVEQMV…LKLPVDTIAW (323 aa). Dihydroxyacetone is bound by residues 53–56, Lys104, and Asp109; that span reads GSGH. Residue His56 is the Proton acceptor of the active site. His218 serves as the catalytic Tele-hemiaminal-histidine intermediate.

Homodimer. The dihydroxyacetone kinase complex is composed of a homodimer of DhaM, a homodimer of DhaK and the subunit DhaL.

The protein resides in the cytoplasm. It catalyses the reaction dihydroxyacetone + phosphoenolpyruvate = dihydroxyacetone phosphate + pyruvate. It functions in the pathway polyol metabolism; glycerol degradation. Its function is as follows. Dihydroxyacetone binding subunit of the dihydroxyacetone kinase, which is responsible for the phosphoenolpyruvate (PEP)-dependent phosphorylation of dihydroxyacetone via a phosphoryl group transfer from DhaL-ATP. The sequence is that of PTS-dependent dihydroxyacetone kinase 1, dihydroxyacetone-binding subunit DhaK from Listeria innocua serovar 6a (strain ATCC BAA-680 / CLIP 11262).